Consider the following 177-residue polypeptide: MSAQSQIRQNYHEESEAGVNRIANLELQASYLYLSVGYYFDRDDVALSKFSKFFRELSEKKRDHAEDFLKFQNKRGGRVVLQDVKKPDDDEWGNGTKAMEVALNLEKSINQAVLDLHKIATDHTDPHMQDYLEHEFLEEEVKLIKKLGDHLTNLRRVKAAEEGMGEYLFDKLTLGED.

One can recognise a Ferritin-like diiron domain in the interval 9 to 158 (QNYHEESEAG…DHLTNLRRVK (150 aa)). Residues E26, H64, and E106 each contribute to the Fe cation site.

This sequence belongs to the ferritin family. In terms of assembly, oligomer of 24 subunits. There are two types of subunits: L (light) chain and H (heavy) chain. The functional molecule is roughly spherical and contains a central cavity into which the insoluble mineral iron core is deposited.

In terms of biological role, stores iron in a soluble, non-toxic, readily available form. Important for iron homeostasis. Iron is taken up in the ferrous form and deposited as ferric hydroxides after oxidation. This Xenopus laevis (African clawed frog) protein is Ferritin light chain, oocyte isoform.